The chain runs to 84 residues: Small, acid-soluble spore protein gamma-type (84 aa).

Composition is skewed to polar residues over residues 1–25 (MANS…SAAG) and 34–44 (ASETNAQQVRK). The segment at 1–84 (MANSNNFSKT…SAEQNKQQNS (84 aa)) is disordered. 2 repeats span residues 21–47 (QSAA…KQNQ) and 48–74 (QSAG…QQNQ). 2 stretches are compositionally biased toward low complexity: residues 45 to 57 (QNQQ…GQFG) and 71 to 84 (QQNQ…QQNS).

It belongs to the gamma-type SASP family.

SASP are proteins degraded in the first minutes of spore germination and provide amino acids for both new protein synthesis and metabolism. These proteins may be involved in dormant spore's high resistance to UV light. This chain is Small, acid-soluble spore protein gamma-type (sspE), found in Bacillus subtilis (strain 168).